The sequence spans 89 residues: Small ribosomal subunit protein uS15 (89 aa).

This sequence belongs to the universal ribosomal protein uS15 family. Part of the 30S ribosomal subunit. Forms a bridge to the 50S subunit in the 70S ribosome, contacting the 23S rRNA.

Its function is as follows. One of the primary rRNA binding proteins, it binds directly to 16S rRNA where it helps nucleate assembly of the platform of the 30S subunit by binding and bridging several RNA helices of the 16S rRNA. In terms of biological role, forms an intersubunit bridge (bridge B4) with the 23S rRNA of the 50S subunit in the ribosome. In Frankia casuarinae (strain DSM 45818 / CECT 9043 / HFP020203 / CcI3), this protein is Small ribosomal subunit protein uS15.